A 213-amino-acid polypeptide reads, in one-letter code: Guanylate kinase (213 aa).

In terms of domain architecture, Guanylate kinase-like spans 10–189 (GLLLMVVAPS…AYADLAHIYH (180 aa)). 17–24 (APSGVGKT) lines the ATP pocket.

The protein belongs to the guanylate kinase family.

It localises to the cytoplasm. It carries out the reaction GMP + ATP = GDP + ADP. Functionally, essential for recycling GMP and indirectly, cGMP. The sequence is that of Guanylate kinase (gmk) from Caulobacter vibrioides (strain ATCC 19089 / CIP 103742 / CB 15) (Caulobacter crescentus).